We begin with the raw amino-acid sequence, 896 residues long: Translation initiation factor IF-2 (896 aa).

Positions 117–174 (AEAEAKAKAEAEAKAKVDAEAKVKAKAEAEAKAKAKVQTEKPAAETAEDKAAKAEEAK) are enriched in basic and acidic residues. Positions 117 to 303 (AEAEAKAKAE…TRSVAPESMD (187 aa)) are disordered. A compositionally biased stretch (low complexity) spans 175 to 195 (LLAAQDAVAKAKANEEASAAA). The span at 196-227 (DEARRLAEENEKRWAEEEKARKEAEKSVDHHV) shows a compositional bias: basic and acidic residues. Positions 254 to 268 (PSANAGNNANANAGA) are enriched in low complexity. A tr-type G domain is found at 396 to 563 (PRAPVVTIMG…GILLEAEVLE (168 aa)). The segment at 405–412 (GHVDHGKT) is G1. 405–412 (GHVDHGKT) provides a ligand contact to GTP. Residues 430–434 (GITQH) form a G2 region. The G3 stretch occupies residues 451 to 454 (DTPG). GTP is bound by residues 451 to 455 (DTPGH) and 505 to 508 (NKID). The tract at residues 505-508 (NKID) is G4. The G5 stretch occupies residues 541–543 (SAK).

The protein belongs to the TRAFAC class translation factor GTPase superfamily. Classic translation factor GTPase family. IF-2 subfamily.

The protein resides in the cytoplasm. In terms of biological role, one of the essential components for the initiation of protein synthesis. Protects formylmethionyl-tRNA from spontaneous hydrolysis and promotes its binding to the 30S ribosomal subunits. Also involved in the hydrolysis of GTP during the formation of the 70S ribosomal complex. The chain is Translation initiation factor IF-2 from Shewanella pealeana (strain ATCC 700345 / ANG-SQ1).